The primary structure comprises 118 residues: Non-specific lipid-transfer protein-like 1 (118 aa).

The region spanning Ser5–Met113 is the SCP2 domain.

The protein is Non-specific lipid-transfer protein-like 1 (nlt-1) of Caenorhabditis elegans.